We begin with the raw amino-acid sequence, 355 residues long: Beta-ketoacyl-[acyl-carrier-protein] synthase III (355 aa).

Active-site residues include Cys122 and His280. The segment at Gln281–Arg285 is ACP-binding. Residue Asn311 is part of the active site.

This sequence belongs to the thiolase-like superfamily. FabH family. Homodimer.

Its subcellular location is the cytoplasm. The catalysed reaction is malonyl-[ACP] + acetyl-CoA + H(+) = 3-oxobutanoyl-[ACP] + CO2 + CoA. Its pathway is lipid metabolism; fatty acid biosynthesis. Catalyzes the condensation reaction of fatty acid synthesis by the addition to an acyl acceptor of two carbons from malonyl-ACP. Catalyzes the first condensation reaction which initiates fatty acid synthesis and may therefore play a role in governing the total rate of fatty acid production. Possesses both acetoacetyl-ACP synthase and acetyl transacylase activities. Its substrate specificity determines the biosynthesis of branched-chain and/or straight-chain of fatty acids. In Kocuria rhizophila (strain ATCC 9341 / DSM 348 / NBRC 103217 / DC2201), this protein is Beta-ketoacyl-[acyl-carrier-protein] synthase III.